A 152-amino-acid polypeptide reads, in one-letter code: Large ribosomal subunit protein uL22 (152 aa).

It belongs to the universal ribosomal protein uL22 family. In terms of assembly, part of the 50S ribosomal subunit.

Its function is as follows. This protein binds specifically to 23S rRNA. It makes multiple contacts with different domains of the 23S rRNA in the assembled 50S subunit and ribosome. The globular domain of the protein is located near the polypeptide exit tunnel on the outside of the subunit, while an extended beta-hairpin is found that lines the wall of the exit tunnel in the center of the 70S ribosome. This is Large ribosomal subunit protein uL22 from Methanothrix thermoacetophila (strain DSM 6194 / JCM 14653 / NBRC 101360 / PT) (Methanosaeta thermophila).